Consider the following 241-residue polypeptide: 1-(5-phosphoribosyl)-5-[(5-phosphoribosylamino)methylideneamino] imidazole-4-carboxamide isomerase (241 aa).

The active-site Proton acceptor is D10. Catalysis depends on D131, which acts as the Proton donor.

Belongs to the HisA/HisF family.

It localises to the cytoplasm. It carries out the reaction 1-(5-phospho-beta-D-ribosyl)-5-[(5-phospho-beta-D-ribosylamino)methylideneamino]imidazole-4-carboxamide = 5-[(5-phospho-1-deoxy-D-ribulos-1-ylimino)methylamino]-1-(5-phospho-beta-D-ribosyl)imidazole-4-carboxamide. It participates in amino-acid biosynthesis; L-histidine biosynthesis; L-histidine from 5-phospho-alpha-D-ribose 1-diphosphate: step 4/9. This chain is 1-(5-phosphoribosyl)-5-[(5-phosphoribosylamino)methylideneamino] imidazole-4-carboxamide isomerase, found in Bifidobacterium longum subsp. infantis (strain ATCC 15697 / DSM 20088 / JCM 1222 / NCTC 11817 / S12).